The chain runs to 110 residues: Small ribosomal subunit protein bS16 (110 aa).

The tract at residues 84–110 is disordered; it reads KRAPRNNPEKAVPRKERKAAAEAAAKA. A compositionally biased stretch (basic and acidic residues) spans 90–103; it reads NPEKAVPRKERKAA.

This sequence belongs to the bacterial ribosomal protein bS16 family.

The chain is Small ribosomal subunit protein bS16 from Afipia carboxidovorans (strain ATCC 49405 / DSM 1227 / KCTC 32145 / OM5) (Oligotropha carboxidovorans).